Here is a 397-residue protein sequence, read N- to C-terminus: ATP-dependent RNA helicase RhlB (397 aa).

The Q motif signature appears at 8–36; sequence TRFHDFNLAPELMHAIQDLGFPYCTPIQA. The 181-residue stretch at 39–219 folds into the Helicase ATP-binding domain; it reads LGFTLKGKDA…KQWTTDPSIV (181 aa). Residue 52 to 59 participates in ATP binding; it reads AQTGTGKT. Positions 165–168 match the DEAD box motif; sequence DEAD. One can recognise a Helicase C-terminal domain in the interval 242-392; the sequence is DKYKLLYNLV…TPPTHLLRAV (151 aa).

This sequence belongs to the DEAD box helicase family. RhlB subfamily. In terms of assembly, component of the RNA degradosome, which is a multiprotein complex involved in RNA processing and mRNA degradation.

Its subcellular location is the cytoplasm. The enzyme catalyses ATP + H2O = ADP + phosphate + H(+). Its function is as follows. DEAD-box RNA helicase involved in RNA degradation. Has RNA-dependent ATPase activity and unwinds double-stranded RNA. This Pseudomonas syringae pv. tomato (strain ATCC BAA-871 / DC3000) protein is ATP-dependent RNA helicase RhlB.